Consider the following 145-residue polypeptide: Mannitol-specific phosphotransferase enzyme IIA component (145 aa).

A PTS EIIA type-2 domain is found at 2 to 145 (ENLTNISIEL…EEITENLAIA (144 aa)). Residue His62 is the Tele-phosphohistidine intermediate of the active site. A Phosphohistidine; by HPr modification is found at His62.

It is found in the cytoplasm. The phosphoenolpyruvate-dependent sugar phosphotransferase system (sugar PTS), a major carbohydrate active transport system, catalyzes the phosphorylation of incoming sugar substrates concomitantly with their translocation across the cell membrane. The enzyme II CmtAB PTS system is involved in D-mannitol transport. In Enterococcus faecalis (strain ATCC 700802 / V583), this protein is Mannitol-specific phosphotransferase enzyme IIA component.